The chain runs to 273 residues: DnaJ homolog subfamily C member 27 (273 aa).

The required for interaction with MAPK1 stretch occupies residues 1-18; it reads MESNVPKRKEPLKSLRIK. Residues 23–30, 71–75, and 134–137 each bind GTP; these read GNAEVGKS, DMAGH, and NKID. The J domain maps to 217–273; the sequence is DSWEMLGVRPGASREEVNKAYRKLAVLLHPDKCVAPGSEDAFKAVVNARTALLKNIK.

It belongs to the small GTPase superfamily. Rab family. As to quaternary structure, interacts directly with MAPK1 (wild-type and kinase-deficient forms). Interacts directly (in GTP-bound form) with MAP2K1 (wild-type and kinase-deficient forms).

Its subcellular location is the nucleus. Functionally, GTPase which can activate the MEK/ERK pathway and induce cell transformation when overexpressed. May act as a nuclear scaffold for MAPK1, probably by association with MAPK1 nuclear export signal leading to enhanced ERK1/ERK2 signaling. This Rattus norvegicus (Rat) protein is DnaJ homolog subfamily C member 27 (Dnajc27).